The primary structure comprises 103 residues: Insulin (103 aa).

A signal peptide spans 1–20 (IQSLPLLALLALSGPGTSHA). Disulfide bonds link C27/C89, C39/C102, and C88/C93. Positions 53 to 80 (DAEHPLVNGPLHGEVGDLPFQQEEFEKV) are cleaved as a propeptide — c peptide.

Belongs to the insulin family. Heterodimer of a B chain and an A chain linked by two disulfide bonds.

It is found in the secreted. Functionally, insulin decreases blood glucose concentration. It increases cell permeability to monosaccharides, amino acids and fatty acids. It accelerates glycolysis, the pentose phosphate cycle, and glycogen synthesis in liver. The polypeptide is Insulin (INS) (Selasphorus rufus (Rufous hummingbird)).